Consider the following 550-residue polypeptide: CTP synthase (550 aa).

The tract at residues 1–265 (MTKFIFVTGG…DEIVVEQLGL (265 aa)) is amidoligase domain. Position 13 (serine 13) interacts with CTP. Residue serine 13 participates in UTP binding. Position 14–19 (14–19 (SLGKGI)) interacts with ATP. Tyrosine 54 contacts L-glutamine. Aspartate 71 is a binding site for ATP. 2 residues coordinate Mg(2+): aspartate 71 and glutamate 139. CTP is bound by residues 146 to 148 (DIE), 186 to 191 (KTKPTQ), and lysine 222. Residues 186–191 (KTKPTQ) and lysine 222 contribute to the UTP site. Residues 290 to 541 (TITLVGKYVD…IRAAAEHRRR (252 aa)) form the Glutamine amidotransferase type-1 domain. Position 351 (glycine 351) interacts with L-glutamine. Cysteine 378 functions as the Nucleophile; for glutamine hydrolysis in the catalytic mechanism. L-glutamine-binding positions include 379 to 382 (LGMQ), glutamate 402, and arginine 469. Active-site residues include histidine 514 and glutamate 516.

It belongs to the CTP synthase family. Homotetramer.

It carries out the reaction UTP + L-glutamine + ATP + H2O = CTP + L-glutamate + ADP + phosphate + 2 H(+). The enzyme catalyses L-glutamine + H2O = L-glutamate + NH4(+). The catalysed reaction is UTP + NH4(+) + ATP = CTP + ADP + phosphate + 2 H(+). It functions in the pathway pyrimidine metabolism; CTP biosynthesis via de novo pathway; CTP from UDP: step 2/2. With respect to regulation, allosterically activated by GTP, when glutamine is the substrate; GTP has no effect on the reaction when ammonia is the substrate. The allosteric effector GTP functions by stabilizing the protein conformation that binds the tetrahedral intermediate(s) formed during glutamine hydrolysis. Inhibited by the product CTP, via allosteric rather than competitive inhibition. Functionally, catalyzes the ATP-dependent amination of UTP to CTP with either L-glutamine or ammonia as the source of nitrogen. Regulates intracellular CTP levels through interactions with the four ribonucleotide triphosphates. The sequence is that of CTP synthase from Nitrosococcus oceani (strain ATCC 19707 / BCRC 17464 / JCM 30415 / NCIMB 11848 / C-107).